The following is a 237-amino-acid chain: Ribonuclease PH (237 aa).

Phosphate-binding positions include Arg-86 and 124–126 (GTR).

Belongs to the RNase PH family. As to quaternary structure, homohexameric ring arranged as a trimer of dimers.

The enzyme catalyses tRNA(n+1) + phosphate = tRNA(n) + a ribonucleoside 5'-diphosphate. In terms of biological role, phosphorolytic 3'-5' exoribonuclease that plays an important role in tRNA 3'-end maturation. Removes nucleotide residues following the 3'-CCA terminus of tRNAs; can also add nucleotides to the ends of RNA molecules by using nucleoside diphosphates as substrates, but this may not be physiologically important. Probably plays a role in initiation of 16S rRNA degradation (leading to ribosome degradation) during starvation. This chain is Ribonuclease PH, found in Erythrobacter litoralis (strain HTCC2594).